Consider the following 431-residue polypeptide: Trigger factor (431 aa).

In terms of domain architecture, PPIase FKBP-type spans 164-249 (GDIAVIDFKG…IKEIKRKELP (86 aa)).

It belongs to the FKBP-type PPIase family. Tig subfamily.

The protein localises to the cytoplasm. It carries out the reaction [protein]-peptidylproline (omega=180) = [protein]-peptidylproline (omega=0). Functionally, involved in protein export. Acts as a chaperone by maintaining the newly synthesized protein in an open conformation. Functions as a peptidyl-prolyl cis-trans isomerase. This is Trigger factor from Clostridium acetobutylicum (strain ATCC 824 / DSM 792 / JCM 1419 / IAM 19013 / LMG 5710 / NBRC 13948 / NRRL B-527 / VKM B-1787 / 2291 / W).